The sequence spans 397 residues: Dual-specificity RNA methyltransferase RlmN (397 aa).

The Proton acceptor role is filled by E116. The Radical SAM core domain occupies 122–366 (EDDRGTLCIS…SPIRKTRGDD (245 aa)). A disulfide bridge links C129 with C371. C136, C140, and C143 together coordinate [4Fe-4S] cluster. S-adenosyl-L-methionine-binding positions include 195–196 (GE), S227, 249–251 (SFH), and N328. The S-methylcysteine intermediate role is filled by C371.

The protein belongs to the radical SAM superfamily. RlmN family. The cofactor is [4Fe-4S] cluster.

It is found in the cytoplasm. The catalysed reaction is adenosine(2503) in 23S rRNA + 2 reduced [2Fe-2S]-[ferredoxin] + 2 S-adenosyl-L-methionine = 2-methyladenosine(2503) in 23S rRNA + 5'-deoxyadenosine + L-methionine + 2 oxidized [2Fe-2S]-[ferredoxin] + S-adenosyl-L-homocysteine. The enzyme catalyses adenosine(37) in tRNA + 2 reduced [2Fe-2S]-[ferredoxin] + 2 S-adenosyl-L-methionine = 2-methyladenosine(37) in tRNA + 5'-deoxyadenosine + L-methionine + 2 oxidized [2Fe-2S]-[ferredoxin] + S-adenosyl-L-homocysteine. Specifically methylates position 2 of adenine 2503 in 23S rRNA and position 2 of adenine 37 in tRNAs. m2A2503 modification seems to play a crucial role in the proofreading step occurring at the peptidyl transferase center and thus would serve to optimize ribosomal fidelity. The chain is Dual-specificity RNA methyltransferase RlmN from Ruegeria sp. (strain TM1040) (Silicibacter sp.).